The sequence spans 107 residues: Nucleoid-associated protein Lferr_1592 (107 aa).

This sequence belongs to the YbaB/EbfC family. As to quaternary structure, homodimer.

The protein localises to the cytoplasm. It is found in the nucleoid. Functionally, binds to DNA and alters its conformation. May be involved in regulation of gene expression, nucleoid organization and DNA protection. This chain is Nucleoid-associated protein Lferr_1592, found in Acidithiobacillus ferrooxidans (strain ATCC 53993 / BNL-5-31) (Leptospirillum ferrooxidans (ATCC 53993)).